The sequence spans 626 residues: Endoglucanase 19 (626 aa).

The N-terminal stretch at 1-23 is a signal peptide; it reads MGSRTTISILVVLLLGLVQLAIS. The Nucleophile role is filled by aspartate 79. Active-site residues include histidine 412, aspartate 464, and glutamate 473. Positions 515–536 are disordered; it reads APVPQRKPTKPPAASSPSPITI. The span at 526–536 shows a compositional bias: low complexity; it reads PAASSPSPITI. N-linked (GlcNAc...) asparagine glycans are attached at residues asparagine 560 and asparagine 622.

Belongs to the glycosyl hydrolase 9 (cellulase E) family.

It localises to the secreted. It carries out the reaction Endohydrolysis of (1-&gt;4)-beta-D-glucosidic linkages in cellulose, lichenin and cereal beta-D-glucans.. This is Endoglucanase 19 from Arabidopsis thaliana (Mouse-ear cress).